Here is a 130-residue protein sequence, read N- to C-terminus: Small ribosomal subunit protein uS8 (130 aa).

Belongs to the universal ribosomal protein uS8 family. In terms of assembly, part of the 30S ribosomal subunit. Contacts proteins S5 and S12.

In terms of biological role, one of the primary rRNA binding proteins, it binds directly to 16S rRNA central domain where it helps coordinate assembly of the platform of the 30S subunit. The sequence is that of Small ribosomal subunit protein uS8 from Cytophaga hutchinsonii (strain ATCC 33406 / DSM 1761 / CIP 103989 / NBRC 15051 / NCIMB 9469 / D465).